The sequence spans 463 residues: 23S rRNA (uracil(1939)-C(5))-methyltransferase RlmD (463 aa).

Positions 6 to 76 (KSRKPQQPEY…KRLEEAEMVA (71 aa)) constitute a TRAM domain. Residues Cys-90, Cys-96, Cys-99, and Cys-178 each contribute to the [4Fe-4S] cluster site. Residues Gln-288, Phe-317, Asn-322, Glu-341, Asp-368, and Asp-389 each contribute to the S-adenosyl-L-methionine site. Cys-415 serves as the catalytic Nucleophile.

It belongs to the class I-like SAM-binding methyltransferase superfamily. RNA M5U methyltransferase family. RlmD subfamily.

It catalyses the reaction uridine(1939) in 23S rRNA + S-adenosyl-L-methionine = 5-methyluridine(1939) in 23S rRNA + S-adenosyl-L-homocysteine + H(+). Catalyzes the formation of 5-methyl-uridine at position 1939 (m5U1939) in 23S rRNA. This Acinetobacter baumannii (strain ACICU) protein is 23S rRNA (uracil(1939)-C(5))-methyltransferase RlmD.